The sequence spans 381 residues: p55-v-Fos-transforming protein (381 aa).

The bZIP domain maps to 137–200 (EEKRRIRRER…EKLEFILAAH (64 aa)). The interval 139–159 (KRRIRRERNKMAAAKCRNRRR) is basic motif. Positions 165–193 (LQAETDQLEDKKSALQTEIANLLKEKEKL) are leucine-zipper.

This sequence belongs to the bZIP family. Fos subfamily.

It is found in the host nucleus. The polypeptide is p55-v-Fos-transforming protein (V-FOS) (Mus musculus (Mouse)).